The sequence spans 89 residues: Small ribosomal subunit protein uS15 (89 aa).

It belongs to the universal ribosomal protein uS15 family. As to quaternary structure, part of the 30S ribosomal subunit. Forms a bridge to the 50S subunit in the 70S ribosome, contacting the 23S rRNA.

Functionally, one of the primary rRNA binding proteins, it binds directly to 16S rRNA where it helps nucleate assembly of the platform of the 30S subunit by binding and bridging several RNA helices of the 16S rRNA. Forms an intersubunit bridge (bridge B4) with the 23S rRNA of the 50S subunit in the ribosome. The sequence is that of Small ribosomal subunit protein uS15 from Chlorobium phaeobacteroides (strain BS1).